A 626-amino-acid chain; its full sequence is KSFFRSLVAASLVIVSYSADTTSVPFDAESRDQIFQHHARSVISGYTNTLGEKNISVPSSPPGGERVGILGAGIGGLYSALILQSLDVPFEIIEASNRVGGRLFTHKFPNGGKYDYYDVGAMRYPLPKSDDKGNYQPGVMQRVGQLFTYLGMHKQLIPYYFKSNKSPGFQYFNGVRARIGEGSSFDAPALGINSSLIDIGVTKIVNDAVGPFAQALFDDLQKHTTTGWDDMMKNDAYSTRSYFSFKYLPSPSFGLPSEHFSTRVINWLETFDKSTGWYDRGLTETVLEAIAFGEVGDGEVDWRCIDGGSHVLPDTIAAFLHKKGGNAFVMNASVTAIGLENPNKEDSPMVVVAGGQKRKYSHVISTLPLPVLRTVDLKNSKLDIVQSNALRKLQYGPSIKIGILFKEPWWTTGQDKNGEKFDLVGGQSYTDLPIRTVVYPSYGVNTNAPSNTLIASYCWTNDAERMGSLIGTGKKTYEEQLEHLVLSNLAAVHNTDYQYLKDRLVDVHSWDWNHNPLTMGAFAFFGPGDFQDLYTSLNRPAANGKLHFAGEALSVRHAWVVGALDSAWRAVYNYLYVTDPAKLPKFFELWGKNAEWFEQPGDGKEPNSDNSLLEKFVRRTHGTVSV.

The signal sequence occupies residues 1-18 (KSFFRSLVAASLVIVSYS). N-linked (GlcNAc...) asparagine glycosylation occurs at Asn54. Residues Gly75, Glu94, Ala95, Arg102, Met122, and Arg123 each coordinate FAD. Arg123 is a binding site for L-glutamate. L-glutamine is bound at residue Arg123. Arg123 serves as a coordination point for L-lysine. Arg123 contributes to the L-phenylalanine binding site. Asn164, Asn193, and Asn331 each carry an N-linked (GlcNAc...) asparagine glycan. Residue Val334 participates in FAD binding. Tyr457 contributes to the L-glutamate binding site. Tyr457 serves as a coordination point for L-glutamine. L-lysine is bound at residue Tyr457. L-phenylalanine is bound at residue Tyr457. FAD is bound at residue Glu551. Position 558 (Ala558) interacts with L-phenylalanine. FAD is bound by residues Trp559 and Val560.

Belongs to the flavin monoamine oxidase family. FIG1 subfamily. As to quaternary structure, homodimer. It depends on FAD as a cofactor. In terms of processing, out of the 4 glycosylated residues, Asn-54 is hypermannosylated. The presence of a hypermannosylated N-glycan on Asn-54 leads to adoption of a more active conformation in the absence of acid activation.

The protein localises to the secreted. The enzyme catalyses an L-alpha-amino acid + O2 + H2O = a 2-oxocarboxylate + H2O2 + NH4(+). The catalysed reaction is L-lysine + O2 + H2O = 6-amino-2-oxohexanoate + H2O2 + NH4(+). It carries out the reaction L-glutamate + O2 + H2O = H2O2 + 2-oxoglutarate + NH4(+). It catalyses the reaction L-arginine + O2 + H2O = 5-guanidino-2-oxopentanoate + H2O2 + NH4(+). The enzyme catalyses L-leucine + O2 + H2O = 4-methyl-2-oxopentanoate + H2O2 + NH4(+). The catalysed reaction is L-asparagine + O2 + H2O = 2-oxosuccinamate + H2O2 + NH4(+). It carries out the reaction L-histidine + O2 + H2O = 3-(imidazol-5-yl)pyruvate + H2O2 + NH4(+). It catalyses the reaction L-isoleucine + O2 + H2O = (S)-3-methyl-2-oxopentanoate + H2O2 + NH4(+). The enzyme catalyses L-methionine + O2 + H2O = 4-methylsulfanyl-2-oxobutanoate + H2O2 + NH4(+). The catalysed reaction is L-phenylalanine + O2 + H2O = 3-phenylpyruvate + H2O2 + NH4(+). It carries out the reaction L-tyrosine + O2 + H2O = 3-(4-hydroxyphenyl)pyruvate + H2O2 + NH4(+). It catalyses the reaction L-glutamine + O2 + H2O = 2-oxoglutaramate + H2O2 + NH4(+). The enzyme catalyses L-alanine + O2 + H2O = pyruvate + H2O2 + NH4(+). With respect to regulation, LAAO4 is activated by exposure to acidic pH, the detergent sodium dodecyl sulfate, or freezing. In terms of biological role, catalyzes the oxidative deamination of L-amino acids with molecular oxygen to the corresponding alpha-keto acids and ammonia. L-glutamine shows the highest relative activity but LAAO4 has a broad substrate specificity, including L-amino acids with big aromatic, acidic and basic side chains. Methyl esters of these L-amino acids are also accepted, ethyl esters are converted but with lower activity, whereas D-Amino acids are not converted. No reaction is detected for small polar amino acids such as L-cysteine or L-aspartate, and very little for small, branched hydrophobic amino acids like L-valine. This is L-amino-acid oxidase 4 from Hebeloma cylindrosporum.